We begin with the raw amino-acid sequence, 278 residues long: Transmembrane protein 45B (278 aa).

7 consecutive transmembrane segments (helical) span residues 7–27 (HALP…KYPL), 49–69 (IIEG…EQFV), 95–115 (YLFF…FHIV), 117–137 (LGLD…LFYF), 149–169 (IHSL…LEVI), 183–203 (LLIL…PPFG), and 215–235 (IMFI…IVAI). Phosphoserine is present on residues Ser273 and Ser275.

Belongs to the TMEM45 family.

The protein resides in the endosome membrane. Its subcellular location is the lysosome membrane. It localises to the golgi apparatus. It is found in the trans-Golgi network membrane. In terms of biological role, plays a role in innate immunity. This Mus musculus (Mouse) protein is Transmembrane protein 45B (Tmem45b).